The following is a 51-amino-acid chain: Bacteriocin aureocin A53 (51 aa).

M1 carries the post-translational modification N-formylmethionine.

It localises to the secreted. In terms of biological role, antibacterial peptide active against a broad range of lactic acid bacteria, L.monocytogenes and many epidemiologically unrelated strains of S.aureus involved in bovine mastitis. The polypeptide is Bacteriocin aureocin A53 (aucA) (Staphylococcus aureus).